The chain runs to 399 residues: Acetate kinase (399 aa).

Mg(2+) is bound at residue N7. An ATP-binding site is contributed by K14. R91 lines the substrate pocket. D148 (proton donor/acceptor) is an active-site residue. Residues H208 to G212, D283 to R285, and G331 to N335 contribute to the ATP site. Residue E384 participates in Mg(2+) binding.

This sequence belongs to the acetokinase family. Homodimer. It depends on Mg(2+) as a cofactor. Requires Mn(2+) as cofactor.

The protein localises to the cytoplasm. It catalyses the reaction acetate + ATP = acetyl phosphate + ADP. It participates in metabolic intermediate biosynthesis; acetyl-CoA biosynthesis; acetyl-CoA from acetate: step 1/2. In terms of biological role, catalyzes the formation of acetyl phosphate from acetate and ATP. Can also catalyze the reverse reaction. In Desulfitobacterium hafniense (strain DSM 10664 / DCB-2), this protein is Acetate kinase.